We begin with the raw amino-acid sequence, 196 residues long: Putative lipopolysaccharide biosynthesis O-acetyl transferase WbbJ (196 aa).

Belongs to the transferase hexapeptide repeat family.

It functions in the pathway bacterial outer membrane biogenesis; lipopolysaccharide biosynthesis. Putative O-acetyltransferase that transfers an O-acetyl group to the O antigen. This Escherichia coli (strain K12) protein is Putative lipopolysaccharide biosynthesis O-acetyl transferase WbbJ (wbbJ).